A 181-amino-acid chain; its full sequence is MQKCIMRSTEFKTHFSFHSIFSFPLSAALLALISASEPASKAFINVQFISSPLVKKEVLPFIVSFHSLSSNGILSFSPFTSSNLSIAQLPFLIKVPLLSMGSLALENFNKFIPRADLVAAWVTIIMVFTFGNFLSTLSIKTGQNLWHLSKISSSVSPLLLGIILGSQSGEIMLGKNLLITS.

Over 1–14 the chain is Cytoplasmic; it reads MQKCIMRSTEFKTH. A helical membrane pass occupies residues 15-35; it reads FSFHSIFSFPLSAALLALISA. Over 36–58 the chain is Extracellular; sequence SEPASKAFINVQFISSPLVKKEV. Residues 59 to 79 traverse the membrane as a helical segment; it reads LPFIVSFHSLSSNGILSFSPF. Residues 80 to 84 are Cytoplasmic-facing; that stretch reads TSSNL. A helical transmembrane segment spans residues 85–105; the sequence is SIAQLPFLIKVPLLSMGSLAL. The Extracellular segment spans residues 106 to 116; sequence ENFNKFIPRAD. Residues 117–137 form a helical membrane-spanning segment; that stretch reads LVAAWVTIIMVFTFGNFLSTL. Residues 138 to 153 are Cytoplasmic-facing; that stretch reads SIKTGQNLWHLSKISS. Residues 154-174 traverse the membrane as a helical segment; it reads SVSPLLLGIILGSQSGEIMLG. Topologically, residues 175 to 181 are extracellular; sequence KNLLITS.

The protein localises to the membrane. This is an uncharacterized protein from Saccharomyces cerevisiae (strain ATCC 204508 / S288c) (Baker's yeast).